The primary structure comprises 512 residues: Glutathione-binding protein GsiB (512 aa).

The first 26 residues, 1–26 (MARAVHRSGLVALGIATALMASCAFA), serve as a signal peptide directing secretion.

It belongs to the bacterial solute-binding protein 5 family. In terms of assembly, the complex is composed of two ATP-binding proteins (GsiA), two transmembrane proteins (GsiC and GsiD) and a solute-binding protein (GsiB).

It is found in the periplasm. In terms of biological role, part of the ABC transporter complex GsiABCD involved in glutathione import. Binds glutathione. The chain is Glutathione-binding protein GsiB from Escherichia coli O1:K1 / APEC.